The chain runs to 329 residues: Quinone-oxidoreductase QR1, chloroplastic (329 aa).

It belongs to the zinc-containing alcohol dehydrogenase family. Quinone oxidoreductase subfamily.

Its subcellular location is the plastid. It localises to the chloroplast outer membrane. It catalyses the reaction 2 a quinone + NADPH + H(+) = 2 a 1,4-benzosemiquinone + NADP(+). Inhibited by dicumarol. Its function is as follows. NADPH-dependent single-electron reducing quinone reductase. Involved in haustorium initiation in parasitic plants through redox cycling of exogenous haustorium-inducing factors. Can use 9,10-phenanthrenequinone (PAQ), 1,2-naphthoquinone, 5-hydroxy-1,4-naphthoquinone (juglone) and 2,6-dimethoxy-p-benzoquinone (DMBQ) as substrates, but has no activity with menadione, diamide, 2,3-dimethoxy-5-methyl-1,4-benzoquinone or 1,4-naphthoquinone. The chain is Quinone-oxidoreductase QR1, chloroplastic from Triphysaria versicolor (Yellow owl's clover).